The primary structure comprises 234 residues: Opacity protein opA51 (234 aa).

A1 is a signal peptide.

It belongs to the opacity porin family.

It localises to the cell outer membrane. Implicated in a number of adherence functions. OPA proteins are implicated in pathogenesis and are subject to phase variation. The sequence is that of Opacity protein opA51 (opaB) from Neisseria gonorrhoeae.